Here is a 305-residue protein sequence, read N- to C-terminus: Sulfate adenylyltransferase subunit 2 1 (305 aa).

Residues 283–305 (RSGRAIDHDQAGSMERKKREGYF) are disordered.

The protein belongs to the PAPS reductase family. CysD subfamily. As to quaternary structure, heterodimer composed of CysD, the smaller subunit, and CysN.

It catalyses the reaction sulfate + ATP + H(+) = adenosine 5'-phosphosulfate + diphosphate. It participates in sulfur metabolism; hydrogen sulfide biosynthesis; sulfite from sulfate: step 1/3. With CysN forms the ATP sulfurylase (ATPS) that catalyzes the adenylation of sulfate producing adenosine 5'-phosphosulfate (APS) and diphosphate, the first enzymatic step in sulfur assimilation pathway. APS synthesis involves the formation of a high-energy phosphoric-sulfuric acid anhydride bond driven by GTP hydrolysis by CysN coupled to ATP hydrolysis by CysD. This is Sulfate adenylyltransferase subunit 2 1 from Chromohalobacter salexigens (strain ATCC BAA-138 / DSM 3043 / CIP 106854 / NCIMB 13768 / 1H11).